The sequence spans 156 residues: ATP synthase subunit b (156 aa).

The chain crosses the membrane as a helical span at residues 12–32 (VAFLIFVLFCMKYVWPPVITA).

Belongs to the ATPase B chain family. F-type ATPases have 2 components, F(1) - the catalytic core - and F(0) - the membrane proton channel. F(1) has five subunits: alpha(3), beta(3), gamma(1), delta(1), epsilon(1). F(0) has three main subunits: a(1), b(2) and c(10-14). The alpha and beta chains form an alternating ring which encloses part of the gamma chain. F(1) is attached to F(0) by a central stalk formed by the gamma and epsilon chains, while a peripheral stalk is formed by the delta and b chains.

The protein resides in the cell inner membrane. F(1)F(0) ATP synthase produces ATP from ADP in the presence of a proton or sodium gradient. F-type ATPases consist of two structural domains, F(1) containing the extramembraneous catalytic core and F(0) containing the membrane proton channel, linked together by a central stalk and a peripheral stalk. During catalysis, ATP synthesis in the catalytic domain of F(1) is coupled via a rotary mechanism of the central stalk subunits to proton translocation. In terms of biological role, component of the F(0) channel, it forms part of the peripheral stalk, linking F(1) to F(0). This Pseudomonas putida (strain ATCC 700007 / DSM 6899 / JCM 31910 / BCRC 17059 / LMG 24140 / F1) protein is ATP synthase subunit b.